The following is a 409-amino-acid chain: FBD-associated F-box protein At4g10400 (409 aa).

Residues 1–47 (MDRISGLPDEVLVKILSFVPTKVAVSTSILSKRWEFLWMWLTKLKFG) enclose the F-box domain. The FBD domain occupies 330 to 379 (SWNQPSIVPECMLSSLQKFTWFKYLGRPQDRDIAVYILKNACRLRTATIK).

The polypeptide is FBD-associated F-box protein At4g10400 (Arabidopsis thaliana (Mouse-ear cress)).